We begin with the raw amino-acid sequence, 64 residues long: Small ribosomal subunit protein bS21 (64 aa).

The segment at 42 to 64 is disordered; that stretch reads KKEKEKAAAKKRNKYNKRRSFYY. Over residues 50–64 the composition is skewed to basic residues; sequence AKKRNKYNKRRSFYY.

This sequence belongs to the bacterial ribosomal protein bS21 family.

In Malacoplasma penetrans (strain HF-2) (Mycoplasma penetrans), this protein is Small ribosomal subunit protein bS21.